Here is a 427-residue protein sequence, read N- to C-terminus: Ribosomal protein uS12 methylthiotransferase RimO (427 aa).

The 116-residue stretch at methionine 1–valine 116 folds into the MTTase N-terminal domain. Positions 10, 46, 79, 145, 149, and 152 each coordinate [4Fe-4S] cluster. Residues valine 131–glutamate 360 enclose the Radical SAM core domain. Positions glutamate 363–glutamate 426 constitute a TRAM domain.

It belongs to the methylthiotransferase family. RimO subfamily. [4Fe-4S] cluster serves as cofactor.

The protein resides in the cytoplasm. The enzyme catalyses L-aspartate(89)-[ribosomal protein uS12]-hydrogen + (sulfur carrier)-SH + AH2 + 2 S-adenosyl-L-methionine = 3-methylsulfanyl-L-aspartate(89)-[ribosomal protein uS12]-hydrogen + (sulfur carrier)-H + 5'-deoxyadenosine + L-methionine + A + S-adenosyl-L-homocysteine + 2 H(+). Catalyzes the methylthiolation of an aspartic acid residue of ribosomal protein uS12. This chain is Ribosomal protein uS12 methylthiotransferase RimO, found in Thermosipho melanesiensis (strain DSM 12029 / CIP 104789 / BI429).